The sequence spans 297 residues: Heterogeneous nuclear ribonucleoprotein D-like (297 aa).

The disordered stretch occupies residues 1–21 (MTGFGATPDFNEGSKINASKN). 2 consecutive RRM domains span residues 26–108 (GKMF…KGKE) and 111–190 (KKVF…QPKE). The disordered stretch occupies residues 192 to 224 (YRQQQQKQQKGGRGAATGRGGARGRGRGQGWNQ). Residues 202–222 (GGRGAATGRGGARGRGRGQGW) show a composition bias toward gly residues.

Its subcellular location is the nucleus. The protein resides in the cytoplasm. Acts as a transcriptional regulator. Binds DNA and RNA. In Xenopus tropicalis (Western clawed frog), this protein is Heterogeneous nuclear ribonucleoprotein D-like (hnrnpdl).